Reading from the N-terminus, the 207-residue chain is Outer-membrane lipoprotein LolB (207 aa).

A signal peptide spans 1–21 (MPQPDFRLIRLLPLAALVLTA). Cys-22 carries the N-palmitoyl cysteine lipid modification. Residue Cys-22 is the site of S-diacylglycerol cysteine attachment.

It belongs to the LolB family. In terms of assembly, monomer.

The protein localises to the cell outer membrane. Functionally, plays a critical role in the incorporation of lipoproteins in the outer membrane after they are released by the LolA protein. This chain is Outer-membrane lipoprotein LolB, found in Shigella sonnei (strain Ss046).